The primary structure comprises 209 residues: Large ribosomal subunit protein uL3 (209 aa).

Residues 122–151 (AIKRHGQSRGPMSHGSRYHRRPGSMGPVDP) are disordered.

This sequence belongs to the universal ribosomal protein uL3 family. In terms of assembly, part of the 50S ribosomal subunit. Forms a cluster with proteins L14 and L19.

Its function is as follows. One of the primary rRNA binding proteins, it binds directly near the 3'-end of the 23S rRNA, where it nucleates assembly of the 50S subunit. This Bacillus velezensis (strain DSM 23117 / BGSC 10A6 / LMG 26770 / FZB42) (Bacillus amyloliquefaciens subsp. plantarum) protein is Large ribosomal subunit protein uL3.